Consider the following 225-residue polypeptide: Phosphoenolpyruvate guanylyltransferase (225 aa).

Thr-150, Gly-166, and Ser-169 together coordinate phosphoenolpyruvate. Residues 167–186 (PESARGHANSGARPLNGQWP) are disordered.

This sequence belongs to the CofC family.

The catalysed reaction is phosphoenolpyruvate + GTP + H(+) = enolpyruvoyl-2-diphospho-5'-guanosine + diphosphate. It participates in cofactor biosynthesis; coenzyme F420 biosynthesis. Its function is as follows. Guanylyltransferase that catalyzes the activation of phosphoenolpyruvate (PEP) as enolpyruvoyl-2-diphospho-5'-guanosine, via the condensation of PEP with GTP. It is involved in the biosynthesis of coenzyme F420, a hydride carrier cofactor. The protein is Phosphoenolpyruvate guanylyltransferase of Rhodococcus erythropolis (strain PR4 / NBRC 100887).